Consider the following 351-residue polypeptide: Protein RecA (351 aa).

An ATP-binding site is contributed by 73 to 80; sequence GPESSGKT.

Belongs to the RecA family.

It is found in the cytoplasm. Its function is as follows. Can catalyze the hydrolysis of ATP in the presence of single-stranded DNA, the ATP-dependent uptake of single-stranded DNA by duplex DNA, and the ATP-dependent hybridization of homologous single-stranded DNAs. It interacts with LexA causing its activation and leading to its autocatalytic cleavage. The chain is Protein RecA from Herbaspirillum seropedicae.